A 247-amino-acid chain; its full sequence is Ubiquinone biosynthesis O-methyltransferase (247 aa).

S-adenosyl-L-methionine is bound by residues arginine 41, glycine 72, aspartate 93, and methionine 136.

It belongs to the methyltransferase superfamily. UbiG/COQ3 family.

The enzyme catalyses a 3-demethylubiquinol + S-adenosyl-L-methionine = a ubiquinol + S-adenosyl-L-homocysteine + H(+). It catalyses the reaction a 3-(all-trans-polyprenyl)benzene-1,2-diol + S-adenosyl-L-methionine = a 2-methoxy-6-(all-trans-polyprenyl)phenol + S-adenosyl-L-homocysteine + H(+). The protein operates within cofactor biosynthesis; ubiquinone biosynthesis. Functionally, O-methyltransferase that catalyzes the 2 O-methylation steps in the ubiquinone biosynthetic pathway. This Bartonella tribocorum (strain CIP 105476 / IBS 506) protein is Ubiquinone biosynthesis O-methyltransferase.